Consider the following 555-residue polypeptide: Connector enhancer of kinase suppressor of ras 3 (555 aa).

Positions 7 to 72 constitute an SAM domain; that stretch reads WSPKQVVDWT…LEAVDLLCAL (66 aa). One can recognise a CRIC domain in the interval 80-174; the sequence is NMKNLVLKLR…TAVQKDCLVA (95 aa). In terms of domain architecture, PDZ spans 211–293; it reads EVHLPNVRPG…GVVLLLKKRP (83 aa). Disordered regions lie at residues 308–333, 348–391, and 518–538; these read RWKP…MDAS, PPPA…LDQE, and PFQE…ASSG. The span at 311–329 shows a compositional bias: low complexity; it reads PPLVQTSPPPTTTQSPEST. The 222-residue stretch at 325-546 folds into the DUF1170 domain; the sequence is SPESTMDASL…SGEPSLLVSW (222 aa). Phosphoserine is present on residues Ser381 and Ser383.

The protein belongs to the CNKSR family. In terms of assembly, interacts with epithelial sodium channel ENaC. Interacts directly with SCNN1A (ENaC subunit alpha) and SCNN1B (ENaC subunit beta) C-terminal tails. Interacts with ENaC regulatory proteins NEDD4L, RAF1 and SGK1.

The protein resides in the cytoplasm. It is found in the apical cell membrane. In terms of biological role, involved in transepithelial sodium transport. Regulates aldosterone-induced and epithelial sodium channel (ENaC)-mediated sodium transport through regulation of ENaC cell surface expression. Acts as a scaffold protein coordinating the assembly of an ENaC-regulatory complex (ERC). The chain is Connector enhancer of kinase suppressor of ras 3 (Cnksr3) from Rattus norvegicus (Rat).